A 315-amino-acid chain; its full sequence is Porphobilinogen deaminase (315 aa).

Residue Cys-245 is modified to S-(dipyrrolylmethanemethyl)cysteine.

Belongs to the HMBS family. As to quaternary structure, monomer. It depends on dipyrromethane as a cofactor.

The catalysed reaction is 4 porphobilinogen + H2O = hydroxymethylbilane + 4 NH4(+). Its pathway is porphyrin-containing compound metabolism; protoporphyrin-IX biosynthesis; coproporphyrinogen-III from 5-aminolevulinate: step 2/4. It participates in porphyrin-containing compound metabolism; chlorophyll biosynthesis. Its function is as follows. Tetrapolymerization of the monopyrrole PBG into the hydroxymethylbilane pre-uroporphyrinogen in several discrete steps. The polypeptide is Porphobilinogen deaminase (Prochlorococcus marinus (strain NATL2A)).